We begin with the raw amino-acid sequence, 283 residues long: Secretory carrier-associated membrane protein 2 (283 aa).

The disordered stretch occupies residues 1–47; that stretch reads MARHDPNPFADEEINPFANHTSVPPASNSYLKPLPPEPYDRGATVDI. The Cytoplasmic portion of the chain corresponds to 1 to 123; that stretch reads MARHDPNPFA…LQKIQYVAFT (123 aa). The segment covering 18–30 has biased composition (polar residues); that stretch reads ANHTSVPPASNSY. Positions 50 to 87 form a coiled coil; sequence DSGNDLRAKEMELQAKENELKRKEQELKRREDAIARTG. 4 helical membrane passes run 124–144, 151–171, 186–206, and 234–254; these read TLLG…VAWI, IWLL…VLWY, FGAF…AAVA, and IMYF…IWVI. The Cytoplasmic segment spans residues 255–283; the sequence is QQVYAYFRGSGKAAEMKREATKSTLMRAL.

This sequence belongs to the SCAMP family.

It is found in the cell membrane. The protein resides in the cytoplasmic vesicle. It localises to the secretory vesicle membrane. Probably involved in membrane trafficking. This is Secretory carrier-associated membrane protein 2 (SCAMP2) from Arabidopsis thaliana (Mouse-ear cress).